Consider the following 296-residue polypeptide: Bifunctional protein FolD 1/3 (296 aa).

NADP(+)-binding positions include 166 to 168, S191, and I232; that span reads GRS.

Belongs to the tetrahydrofolate dehydrogenase/cyclohydrolase family. In terms of assembly, homodimer.

It carries out the reaction (6R)-5,10-methylene-5,6,7,8-tetrahydrofolate + NADP(+) = (6R)-5,10-methenyltetrahydrofolate + NADPH. It catalyses the reaction (6R)-5,10-methenyltetrahydrofolate + H2O = (6R)-10-formyltetrahydrofolate + H(+). It participates in one-carbon metabolism; tetrahydrofolate interconversion. Catalyzes the oxidation of 5,10-methylenetetrahydrofolate to 5,10-methenyltetrahydrofolate and then the hydrolysis of 5,10-methenyltetrahydrofolate to 10-formyltetrahydrofolate. The polypeptide is Bifunctional protein FolD 1/3 (Ruegeria pomeroyi (strain ATCC 700808 / DSM 15171 / DSS-3) (Silicibacter pomeroyi)).